The chain runs to 278 residues: Octanoyltransferase LipM (278 aa).

In terms of domain architecture, BPL/LPL catalytic spans 33 to 248; sequence KKMPPTIRFY…GFEKGLDVEL (216 aa). Cys-150 functions as the Acyl-thioester intermediate in the catalytic mechanism.

This sequence belongs to the octanoyltransferase LipM family. Monomer.

It catalyses the reaction octanoyl-[ACP] + L-lysyl-[protein] = N(6)-octanoyl-L-lysyl-[protein] + holo-[ACP] + H(+). Its pathway is protein modification; protein lipoylation via endogenous pathway; protein N(6)-(lipoyl)lysine from octanoyl-[acyl-carrier-protein]. Its function is as follows. Catalyzes the transfer of endogenously produced octanoic acid from octanoyl-acyl-carrier-protein onto the lipoyl domain of GcvH, an intermediate carrier during protein lipoylation. The protein is Octanoyltransferase LipM of Bacillus cereus (strain ATCC 14579 / DSM 31 / CCUG 7414 / JCM 2152 / NBRC 15305 / NCIMB 9373 / NCTC 2599 / NRRL B-3711).